Consider the following 127-residue polypeptide: Aspartate 1-decarboxylase (127 aa).

Serine 25 acts as the Schiff-base intermediate with substrate; via pyruvic acid in catalysis. Serine 25 is subject to Pyruvic acid (Ser). Threonine 57 is a binding site for substrate. Tyrosine 58 serves as the catalytic Proton donor. Substrate is bound at residue glycine 73–alanine 75.

It belongs to the PanD family. Heterooctamer of four alpha and four beta subunits. Requires pyruvate as cofactor. Is synthesized initially as an inactive proenzyme, which is activated by self-cleavage at a specific serine bond to produce a beta-subunit with a hydroxyl group at its C-terminus and an alpha-subunit with a pyruvoyl group at its N-terminus.

It localises to the cytoplasm. The enzyme catalyses L-aspartate + H(+) = beta-alanine + CO2. Its pathway is cofactor biosynthesis; (R)-pantothenate biosynthesis; beta-alanine from L-aspartate: step 1/1. Functionally, catalyzes the pyruvoyl-dependent decarboxylation of aspartate to produce beta-alanine. This Halalkalibacterium halodurans (strain ATCC BAA-125 / DSM 18197 / FERM 7344 / JCM 9153 / C-125) (Bacillus halodurans) protein is Aspartate 1-decarboxylase.